The primary structure comprises 1503 residues: MEPSALRKAGSEQEEGFEGLPRRVTDLGMVSNLRRSNSSLFKSWRLQCPFGNNDKQESLSSWIPENIKKKECVYFVESSKLSDAGKVVCQCGYTHEQHLEEATKPHTFQGTQWDPKKHVQEMPTDAFGDIVFTGLSQKVKKYVRVSQDTPSSVIYHLMTQHWGLDVPNLLISVTGGAKNFNMKPRLKSIFRRGLVKVAQTTGAWIITGGSHTGVMKQVGEAVRDFSLSSSYKEGELITIGVATWGTVHRREGLIHPTGSFPAEYILDEDGQGNLTCLDSNHSHFILVDDGTHGQYGVEIPLRTRLEKFISEQTKERGGVAIKIPIVCVVLEGGPGTLHTIDNATTNGTPCVVVEGSGRVADVIAQVANLPVSDITISLIQQKLSVFFQEMFETFTESRIVEWTKKIQDIVRRRQLLTVFREGKDGQQDVDVAILQALLKASRSQDHFGHENWDHQLKLAVAWNRVDIARSEIFMDEWQWKPSDLHPTMTAALISNKPEFVKLFLENGVQLKEFVTWDTLLYLYENLDPSCLFHSKLQKVLVEDPERPACAPAAPRLQMHHVAQVLRELLGDFTQPLYPRPRHNDRLRLLLPVPHVKLNVQGVSLRSLYKRSSGHVTFTMDPIRDLLIWAIVQNRRELAGIIWAQSQDCIAAALACSKILKELSKEEEDTDSSEEMLALAEEYEHRAIGVFTECYRKDEERAQKLLTRVSEAWGKTTCLQLALEAKDMKFVSHGGIQAFLTKVWWGQLSVDNGLWRVTLCMLAFPLLLTGLISFREKRLQDVGTPAARARAFFTAPVVVFHLNILSYFAFLCLFAYVLMVDFQPVPSWCECAIYLWLFSLVCEEMRQLFYDPDECGLMKKAALYFSDFWNKLDVGAILLFVAGLTCRLIPATLYPGRVILSLDFILFCLRLMHIFTISKTLGPKIIIVKRMMKDVFFFLFLLAVWVVSFGVAKQAILIHNERRVDWLFRGAVYHSYLTIFGQIPGYIDGVNFNPEHCSPNGTDPYKPKCPESDATQQRPAFPEWLTVLLLCLYLLFTNILLLNLLIAMFNYTFQQVQEHTDQIWKFQRHDLIEEYHGRPAAPPPFILLSHLQLFIKRVVLKTPAKRHKQLKNKLEKNEEAALLSWEIYLKENYLQNRQFQQKQRPEQKIEDISNKVDAMVDLLDLDPLKRSGSMEQRLASLEEQVAQTAQALHWIVRTLRASGFSSEADVPTLASQKAAEEPDAEPGGRKKTEEPGDSYHVNARHLLYPNCPVTRFPVPNEKVPWETEFLIYDPPFYTAERKDAAAMDPMGDTLEPLSTIQYNVVDGLRDRRSFHGPYTVQAGLPLNPMGRTGLRGRGSLSCFGPNHTLYPMVTRWRRNEDGAICRKSIKKMLEVLVVKLPLSEHWALPGGSREPGEMLPRKLKRILRQEHWPSFENLLKCGMEVYKGYMDDPRNTDNAWIETVAVSVHFQDQNDVELNRLNSNLHACDSGASIRWQVVDRRIPLYANHKTLLQKAAAEFGAHY.

The interval Met1–Leu20 is disordered. The Cytoplasmic segment spans residues Met1 to Gly752. ADP-D-ribose-binding residues include Thr174, Asn179, Arg302, Gly333, and Thr336. Thr740 carries the post-translational modification Phosphothreonine. Residues Leu753–Gly769 lie within the membrane without spanning it. Topologically, residues Leu770–Pro795 are cytoplasmic. Residues Val796–Val816 form a helical membrane-spanning segment. Over Leu817–Trp827 the chain is Extracellular. Residues Cys828–Phe848 traverse the membrane as a helical segment. Ca(2+) is bound by residues Glu843 and Gln846. Over Tyr849–Phe867 the chain is Cytoplasmic. Residues Trp868–Ile888 form a helical membrane-spanning segment. Asn869 contributes to the Ca(2+) binding site. Over Pro889 to Arg896 the chain is Extracellular. Residues Val897–Ser917 form a helical membrane-spanning segment. Topologically, residues Lys918–Arg929 are cytoplasmic. The helical transmembrane segment at Met930–Val950 threads the bilayer. Topologically, residues Ala951–Ala970 are extracellular. The segment at residues Val971–Tyr985 is an intramembrane region (pore-forming). The Selectivity filter signature appears at Phe979 to Ile982. At Ile986–Glu1022 the chain is on the extracellular side. Cys996 and Cys1008 are joined by a disulfide. A helical membrane pass occupies residues Trp1023–Leu1044. The Cytoplasmic segment spans residues Ile1045–Ala1079. Glu1073 is a binding site for Ca(2+). Residues Ala1080 to Val1098 lie within the membrane without spanning it. The Cytoplasmic segment spans residues Leu1099–Tyr1503. The segment at Glu1206–Ser1237 is disordered. The Nudix hydrolase domain occupies Arg1354 to Glu1498. Leu1381 and Ser1382 together coordinate ADP-D-ribose. The short motif at Gly1390 to Trp1411 is the Nudix box element. 4 residues coordinate ADP-D-ribose: Asp1431, Arg1433, Tyr1485, and Asn1487.

Belongs to the transient receptor (TC 1.A.4) family. LTrpC subfamily. TRPM2 sub-subfamily. Homotetramer. Isoform 1 can interact with isoform 3. This interaction decreases Ca(2+) influx through isoform 1 and suppresses susceptibility to oxidative stress-induced cell death. Post-translationally, phosphorylation of TRPM2 at Thr-740 by protein kinase C (PKC) counteracts the effect of cytosolic Ca(2+) and elevates the temperature threshold. As to expression, highly expressed in brain and peripheral blood cells, such as neutrophils. Also detected in bone marrow, spleen, heart, liver and lung. Isoform 2 is found in neutrophil granulocytes.

It is found in the cell membrane. The protein resides in the perikaryon. Its subcellular location is the cell projection. It localises to the cytoplasmic vesicle. The protein localises to the lysosome. It catalyses the reaction Ca(2+)(in) = Ca(2+)(out). It carries out the reaction Na(+)(in) = Na(+)(out). Its activity is regulated as follows. Activated by intracellular ADP-ribose, beta-NAD (NAD(+)) and similar compounds, and by oxidative stress caused by reactive oxygen or nitrogen species. Ca(2+) and PI(4,5)P2 are required for channel opening by ADP-ribose. Activation by ADP-ribose and beta-NAD is strongly increased by moderate heat (35 to 40 degrees Celsius). Likewise, reactive oxygen species lower the threshold for activation by moderate heat (37 degrees Celsius). Activated by moderate heat (35 to 40 degrees Celsius). Inactivated by exposure to extracellular pH between 4.0 and 6.5; irreversibly inactivated when open channels are exposed to extracellular pH between 4.0 and 6.5, while pre-exposure of closed channels to extracellular pH 5.5 gives rise to currents that rapidly inactivate, but protects against irreversible inactivation. Inactivated by intracellular ATP. Activated by arachidonic acid. Inhibited by 2-aminoethyl diphenylborinate (2-APB). Nonselective, voltage-independent cation channel that mediates Na(+) and Ca(2+) influx, leading to increased cytoplasmic Ca(2+) levels. Functions as a ligand-gated ion channel, gated by intracellular adenosine diphosphate ribose (ADP-ribose), Ca(2+), warm temperature, and oxidative stress. The precise physiological activators are under debate; the true, physiological activators may be ADP-ribose and ADP-ribose-2'-phosphate. Binding of ADP-ribose to the cytoplasmic Nudix domain causes a conformation change; the channel is primed but still requires Ca(2+) binding to trigger channel opening. Extracellular Ca(2+) passes through the channel and increases channel activity. Contributes to Ca(2+) release from intracellular stores in response to ADP-ribose. Plays a role in numerous processes that involve signaling via intracellular Ca(2+) levels. Besides, mediates the release of lysosomal Zn(2+) stores in response to reactive oxygen species, leading to increased cytosolic Zn(2+) levels. Plays a role in mediating behavorial and physiological responses to moderate heat and thereby contributes to body temperature homeostasis. Plays a role in insulin secretion, a process that requires increased cytoplasmic Ca(2+) levels. Required for normal IFNG and cytokine secretion and normal innate immune immunity in response to bacterial infection. Required for normal phagocytosis and cytokine release by macrophages exposed to zymosan (in vitro). Plays a role in dendritic cell differentiation and maturation, and in dendritic cell chemotaxis via its role in regulating cytoplasmic Ca(2+) levels. Plays a role in the regulation of the reorganization of the actin cytoskeleton and filopodia formation in response to reactive oxygen species via its role in increasing cytoplasmic Ca(2+) and Zn(2+) levels. Confers susceptibility to cell death following oxidative stress. Functionally, lacks cation channel activity. Does not mediate cation transport in response to oxidative stress or ADP-ribose. In terms of biological role, lacks cation channel activity and negatively regulates the channel activity of isoform 1. Negatively regulates susceptibility to cell death in reposponse to oxidative stress. This Homo sapiens (Human) protein is Transient receptor potential cation channel subfamily M member 2 (TRPM2).